A 665-amino-acid polypeptide reads, in one-letter code: Envelope glycoprotein (665 aa).

A signal peptide spans 1-31 (MESTTLSKPFKNQVNPWGPLIVLLILGRVNP). The tract at residues 32–267 (VALGNSPHQV…KITDSGPRVP (236 aa)) is receptor-binding domain (RBD). Topologically, residues 32 to 605 (VALGNSPHQV…FNGSPWFTTL (574 aa)) are extracellular. Asn-43 carries an N-linked (GlcNAc...) asparagine; by host glycan. 5 disulfides stabilise this stretch: Cys-77–Cys-129, Cys-103–Cys-118, Cys-104–Cys-114, Cys-152–Cys-172, and Cys-164–Cys-177. A Zn(2+)-binding site is contributed by Asp-117. Residues Asn-199 and Asn-211 are each glycosylated (N-linked (GlcNAc...) asparagine; by host). An intrachain disulfide couples Cys-209 to Cys-215. The interval 266 to 307 (VPIGPNPVLSDQRPPSQPRSPPHSNSTPTETPLTLPEPPPAG) is disordered. N-linked (GlcNAc...) asparagine; by host glycosylation is present at Asn-324. 6 cysteine pairs are disulfide-bonded: Cys-334/Cys-337, Cys-334/Cys-558, Cys-364/Cys-418, Cys-383/Cys-395, Cys-425/Cys-438, and Cys-550/Cys-557. A CXXC motif is present at residues 334 to 337 (CWLC). N-linked (GlcNAc...) asparagine; by host glycans are attached at residues Asn-356 and Asn-363. N-linked (GlcNAc...) asparagine; by host glycosylation is found at Asn-396, Asn-400, and Asn-432. The interval 470–490 (VSLTLALLLGGLTMGGIAAGI) is fusion peptide. The stretch at 505 to 532 (AAVHDDLKEVEKSITNLEKSLTSLSEVV) forms a coiled coil. Residues 533 to 549 (LQNRRGLDLLFLKEGGL) form an immunosuppression region. The CX6CC motif lies at 550–558 (CAALKEECC). Residues 606–626 (ISTIMGPLIVLLLILLLGPCI) form a helical membrane-spanning segment. The S-palmitoyl cysteine; by host moiety is linked to residue Cys-625. Residues 627–665 (LNRLVQFVKDRISVVQALVLTQQYHQLKSIDPEEMESRE) lie on the Cytoplasmic side of the membrane. The short motif at 650–653 (YHQL) is the YXXL motif; contains endocytosis signal element.

As to quaternary structure, the mature envelope protein (Env) consists of a trimer of SU-TM heterodimers attached by a labile interchain disulfide bond. Post-translationally, specific enzymatic cleavages in vivo yield mature proteins. Envelope glycoproteins are synthesized as an inactive precursor that is N-glycosylated and processed likely by host cell furin or by a furin-like protease in the Golgi to yield the mature SU and TM proteins. The cleavage site between SU and TM requires the minimal sequence [KR]-X-[KR]-R. The R-peptide is released from the C-terminus of the cytoplasmic tail of the TM protein upon particle formation as a result of proteolytic cleavage by the viral protease. Cleavage of this peptide is required for TM to become fusogenic. The CXXC motif is highly conserved across a broad range of retroviral envelope proteins. It is thought to participate in the formation of a labile disulfide bond possibly with the CX6CC motif present in the transmembrane protein. Isomerization of the intersubunit disulfide bond to an SU intrachain disulfide bond is thought to occur upon receptor recognition in order to allow membrane fusion. In terms of processing, the transmembrane protein is palmitoylated. Post-translationally, the R-peptide is palmitoylated.

The protein localises to the virion membrane. Its subcellular location is the host cell membrane. Functionally, the surface protein (SU) attaches the virus to the host cell by binding to its receptor. This interaction triggers the refolding of the transmembrane protein (TM) and is thought to activate its fusogenic potential by unmasking its fusion peptide. Fusion occurs at the host cell plasma membrane. The transmembrane protein (TM) acts as a class I viral fusion protein. Under the current model, the protein has at least 3 conformational states: pre-fusion native state, pre-hairpin intermediate state, and post-fusion hairpin state. During viral and target cell membrane fusion, the coiled coil regions (heptad repeats) assume a trimer-of-hairpins structure, positioning the fusion peptide in close proximity to the C-terminal region of the ectodomain. The formation of this structure appears to drive apposition and subsequent fusion of viral and target cell membranes. Membranes fusion leads to delivery of the nucleocapsid into the cytoplasm. The polypeptide is Envelope glycoprotein (env) (Radiation murine leukemia virus).